Reading from the N-terminus, the 147-residue chain is D-aminoacyl-tRNA deacylase (147 aa).

Residues 136 to 137 (GP) carry the Gly-cisPro motif, important for rejection of L-amino acids motif.

Belongs to the DTD family. In terms of assembly, homodimer.

It is found in the cytoplasm. It carries out the reaction glycyl-tRNA(Ala) + H2O = tRNA(Ala) + glycine + H(+). It catalyses the reaction a D-aminoacyl-tRNA + H2O = a tRNA + a D-alpha-amino acid + H(+). Its function is as follows. An aminoacyl-tRNA editing enzyme that deacylates mischarged D-aminoacyl-tRNAs. Also deacylates mischarged glycyl-tRNA(Ala), protecting cells against glycine mischarging by AlaRS. Acts via tRNA-based rather than protein-based catalysis; rejects L-amino acids rather than detecting D-amino acids in the active site. By recycling D-aminoacyl-tRNA to D-amino acids and free tRNA molecules, this enzyme counteracts the toxicity associated with the formation of D-aminoacyl-tRNA entities in vivo and helps enforce protein L-homochirality. In Streptococcus pyogenes serotype M1, this protein is D-aminoacyl-tRNA deacylase.